The sequence spans 163 residues: Nucleotide-binding protein Spro_1084 (163 aa).

This sequence belongs to the YajQ family.

Its function is as follows. Nucleotide-binding protein. The sequence is that of Nucleotide-binding protein Spro_1084 from Serratia proteamaculans (strain 568).